The chain runs to 290 residues: MLRVVLITGISGSGKSVALRLLEDAGFTCIDNLPVRFLAEFIANARDDAMERVAVAIDVRSPGELAELPDVITASRAMGTSLSVIFLDANTDTLVQRYSESRRRHPLTDRLARGGKTPSLAECIALERELMAPLRDQEHVIDTSDLTPGQLRAWIRDLIQADRPPLVLTFESFAYKRGVPSDADLMFDVRCLPNPYYDRTLRPLTGRDEPVATWLGGFDIVTQMIDDIAAFIRRWLPQYTQDTRNYLTVAIGCTGGQHRSVYVVEQLARRFSDHDPLLVRHRTQLPDDPA.

ATP is bound at residue Gly9–Ser16. Asp58–Ser61 contacts GTP.

It belongs to the RapZ-like family.

Displays ATPase and GTPase activities. This Bordetella parapertussis (strain 12822 / ATCC BAA-587 / NCTC 13253) protein is Nucleotide-binding protein BPP4038.